A 138-amino-acid chain; its full sequence is Histone H3 (138 aa).

Residues 1-49 (MARTKQTARKSTGGKAPRKQLATKAARKQAPSQVSGGVKKPHRYRPGTV) are disordered. Lys-5 carries the post-translational modification N6,N6,N6-trimethyllysine; alternate. At Lys-5 the chain carries N6,N6-dimethyllysine; alternate. An N6-methyllysine; alternate mark is found at Lys-5 and Lys-10. An N6-acetyllysine; alternate modification is found at Lys-10. A Phosphoserine modification is found at Ser-11. The residue at position 15 (Lys-15) is an N6,N6-dimethyllysine; alternate. N6-methyllysine; alternate is present on residues Lys-15, Lys-19, Lys-24, Lys-28, and Lys-39. An N6-acetyllysine; alternate mark is found at Lys-15, Lys-19, Lys-24, Lys-28, and Lys-39. 2 positions are modified to N6,N6,N6-trimethyllysine; alternate: Lys-28 and Lys-39. An N6,N6-dimethyllysine; alternate mark is found at Lys-28 and Lys-39. An N6-acetyllysine mark is found at Lys-59 and Lys-67. N6,N6,N6-trimethyllysine; alternate is present on Lys-82. Lys-82 carries the N6,N6-dimethyllysine; alternate modification. An N6-methyllysine; alternate modification is found at Lys-82.

Belongs to the histone H3 family. As to quaternary structure, the nucleosome is a histone octamer containing two molecules each of H2A, H2B, H3 and H4 assembled in one H3-H4 heterotetramer and two H2A-H2B heterodimers. The octamer wraps approximately 147 bp of DNA. Post-translationally, phosphorylated to form H3S10ph. H3S10ph promotes subsequent H3K14ac formation and is required for transcriptional activation through TBP recruitment to the promoters. In terms of processing, mono-, di- and trimethylated by the COMPASS complex to form H3K4me1/2/3. H3K4me activates gene expression by regulating transcription elongation and plays a role in telomere length maintenance. H3K4me enrichment correlates with transcription levels, and occurs in a 5' to 3' gradient with H3K4me3 enrichment at the 5'-end of genes, shifting to H3K4me2 and then H3K4me1. Methylated by SET2 to form H3K36me. H3K36me represses gene expression. Methylated by DOT1 to form H3K79me. H3K79me is required for association of SIR proteins with telomeric regions and for telomeric silencing. The COMPASS-mediated formation of H3K4me2/3 and the DOT1-mediated formation of H3K79me require H2BK123ub1. Acetylation of histone H3 leads to transcriptional activation. H3K14ac formation by GCN5 is promoted by H3S10ph. H3K14ac can also be formed by ESA1. H3K56ac formation occurs predominantly in newly synthesized H3 molecules during G1, S and G2/M of the cell cycle and may be involved in DNA repair.

It is found in the nucleus. It localises to the chromosome. Core component of nucleosome. Nucleosomes wrap and compact DNA into chromatin, limiting DNA accessibility to the cellular machineries which require DNA as a template. Histones thereby play a central role in transcription regulation, DNA repair, DNA replication and chromosomal stability. DNA accessibility is regulated via a complex set of post-translational modifications of histones, also called histone code, and nucleosome remodeling. This is Histone H3 (HHT1) from Cryptococcus neoformans var. neoformans serotype D (strain B-3501A) (Filobasidiella neoformans).